The chain runs to 504 residues: Glucose-6-phosphate isomerase (504 aa).

Glu-333 (proton donor) is an active-site residue. Active-site residues include His-364 and Lys-473.

It belongs to the GPI family.

It is found in the cytoplasm. It catalyses the reaction alpha-D-glucose 6-phosphate = beta-D-fructose 6-phosphate. It participates in carbohydrate biosynthesis; gluconeogenesis. The protein operates within carbohydrate degradation; glycolysis; D-glyceraldehyde 3-phosphate and glycerone phosphate from D-glucose: step 2/4. Catalyzes the reversible isomerization of glucose-6-phosphate to fructose-6-phosphate. The protein is Glucose-6-phosphate isomerase of Xanthomonas euvesicatoria pv. vesicatoria (strain 85-10) (Xanthomonas campestris pv. vesicatoria).